A 654-amino-acid chain; its full sequence is Threonine--tRNA ligase (654 aa).

Residues 1 to 63 form the TGS domain; the sequence is MASINVKFPD…TTDGSIEIIA (63 aa). Positions 248–546 are catalytic; that stretch reads DHRVIGNELD…LTEIYKGAFP (299 aa). Zn(2+)-binding residues include Cys-342, His-393, and His-523.

The protein belongs to the class-II aminoacyl-tRNA synthetase family. Homodimer. Zn(2+) serves as cofactor.

The protein resides in the cytoplasm. It carries out the reaction tRNA(Thr) + L-threonine + ATP = L-threonyl-tRNA(Thr) + AMP + diphosphate + H(+). Catalyzes the attachment of threonine to tRNA(Thr) in a two-step reaction: L-threonine is first activated by ATP to form Thr-AMP and then transferred to the acceptor end of tRNA(Thr). Also edits incorrectly charged L-seryl-tRNA(Thr). This Lactiplantibacillus plantarum (strain ATCC BAA-793 / NCIMB 8826 / WCFS1) (Lactobacillus plantarum) protein is Threonine--tRNA ligase.